Here is a 173-residue protein sequence, read N- to C-terminus: Co-chaperone protein HscB homolog (173 aa).

Residues C5–L77 form the J domain.

The protein belongs to the HscB family. Interacts with HscA and stimulates its ATPase activity.

In terms of biological role, co-chaperone involved in the maturation of iron-sulfur cluster-containing proteins. Seems to help targeting proteins to be folded toward HscA. This chain is Co-chaperone protein HscB homolog, found in Ectopseudomonas mendocina (strain ymp) (Pseudomonas mendocina).